A 143-amino-acid chain; its full sequence is Transcriptional regulator MraZ (143 aa).

2 consecutive SpoVT-AbrB domains span residues Glu5–Glu47 and Ala76–Thr119.

The protein belongs to the MraZ family. In terms of assembly, forms oligomers.

It localises to the cytoplasm. The protein resides in the nucleoid. The chain is Transcriptional regulator MraZ from Staphylococcus epidermidis (strain ATCC 35984 / DSM 28319 / BCRC 17069 / CCUG 31568 / BM 3577 / RP62A).